Here is a 650-residue protein sequence, read N- to C-terminus: Acetyl-coenzyme A synthetase (650 aa).

CoA-binding positions include 191–194, T311, and N335; that span reads RGGR. ATP is bound by residues 387 to 389, 411 to 416, D500, and R515; these read GEP and DTWWQT. S523 contributes to the CoA binding site. ATP is bound at residue R526. Mg(2+) is bound by residues V537, H539, and V542. A CoA-binding site is contributed by R584. K609 carries the N6-acetyllysine modification.

Belongs to the ATP-dependent AMP-binding enzyme family. Requires Mg(2+) as cofactor. Post-translationally, acetylated. Deacetylation by the SIR2-homolog deacetylase activates the enzyme.

It carries out the reaction acetate + ATP + CoA = acetyl-CoA + AMP + diphosphate. In terms of biological role, catalyzes the conversion of acetate into acetyl-CoA (AcCoA), an essential intermediate at the junction of anabolic and catabolic pathways. AcsA undergoes a two-step reaction. In the first half reaction, AcsA combines acetate with ATP to form acetyl-adenylate (AcAMP) intermediate. In the second half reaction, it can then transfer the acetyl group from AcAMP to the sulfhydryl group of CoA, forming the product AcCoA. The sequence is that of Acetyl-coenzyme A synthetase from Shewanella oneidensis (strain ATCC 700550 / JCM 31522 / CIP 106686 / LMG 19005 / NCIMB 14063 / MR-1).